We begin with the raw amino-acid sequence, 445 residues long: 3-phosphoshikimate 1-carboxyvinyltransferase (445 aa).

Residues 1-20 (MSSTHPGRTIRSGATQNLSG) show a composition bias toward polar residues. Residues 1–24 (MSSTHPGRTIRSGATQNLSGTIRP) are disordered. Positions 28, 29, and 33 each coordinate 3-phosphoshikimate. K28 contributes to the phosphoenolpyruvate binding site. Phosphoenolpyruvate contacts are provided by G101 and R129. Residues S174, Q176, D322, and K349 each contribute to the 3-phosphoshikimate site. Q176 contacts phosphoenolpyruvate. D322 functions as the Proton acceptor in the catalytic mechanism. R353 and R397 together coordinate phosphoenolpyruvate.

It belongs to the EPSP synthase family. As to quaternary structure, monomer.

Its subcellular location is the cytoplasm. The catalysed reaction is 3-phosphoshikimate + phosphoenolpyruvate = 5-O-(1-carboxyvinyl)-3-phosphoshikimate + phosphate. The protein operates within metabolic intermediate biosynthesis; chorismate biosynthesis; chorismate from D-erythrose 4-phosphate and phosphoenolpyruvate: step 6/7. In terms of biological role, catalyzes the transfer of the enolpyruvyl moiety of phosphoenolpyruvate (PEP) to the 5-hydroxyl of shikimate-3-phosphate (S3P) to produce enolpyruvyl shikimate-3-phosphate and inorganic phosphate. The chain is 3-phosphoshikimate 1-carboxyvinyltransferase from Magnetococcus marinus (strain ATCC BAA-1437 / JCM 17883 / MC-1).